Here is a 352-residue protein sequence, read N- to C-terminus: Ferrochelatase (352 aa).

Fe cation-binding residues include H222 and E303.

The protein belongs to the ferrochelatase family.

The protein localises to the cytoplasm. The catalysed reaction is heme b + 2 H(+) = protoporphyrin IX + Fe(2+). It participates in porphyrin-containing compound metabolism; protoheme biosynthesis; protoheme from protoporphyrin-IX: step 1/1. Its function is as follows. Catalyzes the ferrous insertion into protoporphyrin IX. This is Ferrochelatase from Brucella abortus (strain S19).